The following is a 447-amino-acid chain: Argininosuccinate synthase (447 aa).

Residues Ala-20–Ser-28 and Ala-46 each bind ATP. Residue Tyr-102 participates in L-citrulline binding. 2 residues coordinate ATP: Gly-132 and Thr-134. Positions 134, 138, and 139 each coordinate L-aspartate. Asn-138 serves as a coordination point for L-citrulline. Asp-139 lines the ATP pocket. Positions 142 and 195 each coordinate L-citrulline. Position 197 (Asp-197) interacts with ATP. L-citrulline contacts are provided by Thr-204, Glu-206, and Glu-283.

The protein belongs to the argininosuccinate synthase family. Type 2 subfamily. Homotetramer.

Its subcellular location is the cytoplasm. The enzyme catalyses L-citrulline + L-aspartate + ATP = 2-(N(omega)-L-arginino)succinate + AMP + diphosphate + H(+). It functions in the pathway amino-acid biosynthesis; L-arginine biosynthesis; L-arginine from L-ornithine and carbamoyl phosphate: step 2/3. The protein is Argininosuccinate synthase (argG) of Neisseria meningitidis serogroup B (strain ATCC BAA-335 / MC58).